A 305-amino-acid chain; its full sequence is Sulfate adenylyltransferase subunit 2 (305 aa).

It belongs to the PAPS reductase family. CysD subfamily. Heterodimer composed of CysD, the smaller subunit, and CysN.

The enzyme catalyses sulfate + ATP + H(+) = adenosine 5'-phosphosulfate + diphosphate. It participates in sulfur metabolism; hydrogen sulfide biosynthesis; sulfite from sulfate: step 1/3. Functionally, with CysN forms the ATP sulfurylase (ATPS) that catalyzes the adenylation of sulfate producing adenosine 5'-phosphosulfate (APS) and diphosphate, the first enzymatic step in sulfur assimilation pathway. APS synthesis involves the formation of a high-energy phosphoric-sulfuric acid anhydride bond driven by GTP hydrolysis by CysN coupled to ATP hydrolysis by CysD. The sequence is that of Sulfate adenylyltransferase subunit 2 from Ectopseudomonas mendocina (strain ymp) (Pseudomonas mendocina).